Consider the following 190-residue polypeptide: CASP-like protein 1U3 (190 aa).

Residues 1-24 are Cytoplasmic-facing; the sequence is MNGATVQPSYKEAGPVRYHPMHDC. A helical transmembrane segment spans residues 25–45; that stretch reads LSLILRLLTLGATIAAIVAML. The Extracellular portion of the chain corresponds to 46-70; the sequence is KSTQTVPTLLGPHTARWKDFPAFEW. The helical transmembrane segment at 71-91 threads the bilayer; it reads FVIGNSIVLVYAALGTLAACL. The Cytoplasmic portion of the chain corresponds to 92–113; the sequence is SLFTRRGPLSYTKTAWLTFLCD. Residues 114–134 form a helical membrane-spanning segment; sequence FICSCALISAGSTALGVAWIG. Residues 135–158 lie on the Extracellular side of the membrane; the sequence is KHGQHSAFWNAVCPTVDRFCDYVQ. A helical membrane pass occupies residues 159-179; that stretch reads GALIATLCGFIFQALSTVIAA. Topologically, residues 180 to 190 are cytoplasmic; that stretch reads SALHNLATHRH.

Belongs to the Casparian strip membrane proteins (CASP) family. As to quaternary structure, homodimer and heterodimers.

The protein localises to the cell membrane. This chain is CASP-like protein 1U3, found in Physcomitrium patens (Spreading-leaved earth moss).